We begin with the raw amino-acid sequence, 100 residues long: Probable DNA-binding protein HU (100 aa).

This sequence belongs to the bacterial histone-like protein family.

Its function is as follows. Histone-like DNA-binding protein which is capable of wrapping DNA to stabilize it, and thus to prevent its denaturation under extreme environmental conditions. This Chlamydia pneumoniae (Chlamydophila pneumoniae) protein is Probable DNA-binding protein HU (hup).